The chain runs to 447 residues: Protein chibby homolog 2 (447 aa).

Ser-41, Ser-85, Ser-88, Ser-96, Ser-123, Ser-143, Ser-147, and Ser-149 each carry phosphoserine. Residues 164–197 (EYLLQEENKSLRDENRALRDENKALRKENKILQV) adopt a coiled-coil conformation. 2 disordered regions span residues 208-244 (HEES…KENT) and 266-320 (WAQA…EDSK). 2 positions are modified to phosphoserine: Ser-211 and Ser-224. Residues 218–232 (LHKDTTSQEVVKKDN) show a composition bias toward basic and acidic residues. Positions 237–264 (AQRSKENTLQFIREENRALQQLLEQRQA) form a coiled coil. Positions 266–276 (WAQAEESATSA) are enriched in low complexity. Phosphoserine occurs at positions 272 and 275. The segment covering 277–290 (EEGKPTSSPKEEPH) has biased composition (basic and acidic residues). Phosphoserine is present on residues Ser-333 and Ser-336. The stretch at 354–412 (LQLLREMNQALQALREENRLLQEENRALHAMREEHRVFQEENKALWENNKLKLQQRLVI) forms a coiled coil.

The protein belongs to the chibby family. SPERT subfamily. Homodimer. Binds to NEK1.

The sequence is that of Protein chibby homolog 2 (Cby2) from Rattus norvegicus (Rat).